The primary structure comprises 243 residues: Adenosylcobinamide-GDP ribazoletransferase (243 aa).

Transmembrane regions (helical) follow at residues 31-51, 55-75, 109-129, 133-153, and 188-208; these read LLFYPLVGAVFGTLLLGFNTL, APLMLHAALVLTAWVLLSGGL, IAVVTLVLVLLLKFAAILALI, ASVWLLLAPVIGRAAMLGLFL, and VLLAGWSGVAVLLVCAVCFFW.

This sequence belongs to the CobS family. Mg(2+) serves as cofactor.

It is found in the cell inner membrane. The catalysed reaction is alpha-ribazole + adenosylcob(III)inamide-GDP = adenosylcob(III)alamin + GMP + H(+). It carries out the reaction alpha-ribazole 5'-phosphate + adenosylcob(III)inamide-GDP = adenosylcob(III)alamin 5'-phosphate + GMP + H(+). The protein operates within cofactor biosynthesis; adenosylcobalamin biosynthesis; adenosylcobalamin from cob(II)yrinate a,c-diamide: step 7/7. Its function is as follows. Joins adenosylcobinamide-GDP and alpha-ribazole to generate adenosylcobalamin (Ado-cobalamin). Also synthesizes adenosylcobalamin 5'-phosphate from adenosylcobinamide-GDP and alpha-ribazole 5'-phosphate. The polypeptide is Adenosylcobinamide-GDP ribazoletransferase (Pseudomonas syringae pv. syringae (strain B728a)).